Reading from the N-terminus, the 207-residue chain is dTTP/UTP pyrophosphatase (207 aa).

Aspartate 79 (proton acceptor) is an active-site residue.

It belongs to the Maf family. YhdE subfamily. It depends on a divalent metal cation as a cofactor.

The protein resides in the cytoplasm. It carries out the reaction dTTP + H2O = dTMP + diphosphate + H(+). It catalyses the reaction UTP + H2O = UMP + diphosphate + H(+). Its function is as follows. Nucleoside triphosphate pyrophosphatase that hydrolyzes dTTP and UTP. May have a dual role in cell division arrest and in preventing the incorporation of modified nucleotides into cellular nucleic acids. This Rhodopseudomonas palustris (strain ATCC BAA-98 / CGA009) protein is dTTP/UTP pyrophosphatase.